The following is a 192-amino-acid chain: EF-hand protein 5 (192 aa).

Residues 1–36 form a disordered region; the sequence is MKDKAPVSSQQDHFSRGGAVGGKPISDVRGTSRPFY. EF-hand domains follow at residues 46-80, 81-118, 119-154, and 155-190; these read AELA…GLHL, SDEE…EVDD, TMLE…GGEC, and STPE…HRLN. The Ca(2+) site is built by Thr100, Glu102, Asp107, Asp132, and Thr136.

The chain is EF-hand protein 5 from Trypanosoma brucei brucei.